We begin with the raw amino-acid sequence, 752 residues long: Probable GTP-binding protein OBGC1, chloroplastic (752 aa).

A chloroplast-targeting transit peptide spans 1–90; it reads MAPAVAVVAA…RFPTANPEPR (90 aa). The interval 19–121 is disordered; the sequence is FSAEARRNTK…EEDEVELGLR (103 aa). Residues 26-36 are compositionally biased toward basic residues; it reads NTKGSRSKRGS. Residues 103 to 117 show a composition bias toward acidic residues; the sequence is GDDEEDEEEEEDEVE. An Obg domain is found at 294–452; sequence MRCFDTAKIY…MWIDLELKLV (159 aa). The region spanning 453–621 is the OBG-type G domain; the sequence is ADVGIVGAPN…VVLAAYKVLQ (169 aa). GTP is bound by residues 459–466, 484–488, 506–509, 573–576, and 602–604; these read GAPNAGKS, FTTLL, DLPG, NKMD, and SAM. Mg(2+) contacts are provided by S466 and T486. Positions 649–728 constitute an OCT domain; that stretch reads ERRAPMNEFE…VGEMEMVWTD (80 aa). The tract at residues 728–752 is disordered; it reads DEPSKTRSSKTMNSKDDSVRWPEFG. Residues 740 to 752 show a composition bias toward basic and acidic residues; the sequence is NSKDDSVRWPEFG.

This sequence belongs to the TRAFAC class OBG-HflX-like GTPase superfamily. OBG GTPase family. It depends on Mg(2+) as a cofactor.

The protein resides in the plastid. The protein localises to the chloroplast. Functionally, probable GTP-binding protein that may play a role in chloroplast development. In Oryza sativa subsp. indica (Rice), this protein is Probable GTP-binding protein OBGC1, chloroplastic (OBGC1).